Consider the following 181-residue polypeptide: Negative modulator of initiation of replication (181 aa).

3 interaction with DNA regions span residues 87–88 (AV), 116–120 (RTRVY), and 150–156 (NTNTGRK).

This sequence belongs to the SeqA family. Homodimer. Polymerizes to form helical filaments.

The protein resides in the cytoplasm. Its function is as follows. Negative regulator of replication initiation, which contributes to regulation of DNA replication and ensures that replication initiation occurs exactly once per chromosome per cell cycle. Binds to pairs of hemimethylated GATC sequences in the oriC region, thus preventing assembly of replication proteins and re-initiation at newly replicated origins. Repression is relieved when the region becomes fully methylated. The chain is Negative modulator of initiation of replication from Shigella dysenteriae serotype 1 (strain Sd197).